A 690-amino-acid chain; its full sequence is Polyribonucleotide nucleotidyltransferase (690 aa).

Mg(2+) contacts are provided by Asp-483 and Asp-489. The 60-residue stretch at 550–609 (PKMEQITVDKKDIAAVIGKGGATIREIVEKSGAKLDVNDEGVVTVAAPDEESRNIAMQMI) folds into the KH domain. The region spanning 619 to 686 (NKIYSGKVMK…DRGKVKLSMK (68 aa)) is the S1 motif domain.

This sequence belongs to the polyribonucleotide nucleotidyltransferase family. The cofactor is Mg(2+).

The protein localises to the cytoplasm. The catalysed reaction is RNA(n+1) + phosphate = RNA(n) + a ribonucleoside 5'-diphosphate. Involved in mRNA degradation. Catalyzes the phosphorolysis of single-stranded polyribonucleotides processively in the 3'- to 5'-direction. This chain is Polyribonucleotide nucleotidyltransferase, found in Pelagibacter ubique (strain HTCC1062).